The primary structure comprises 139 residues: Histone H3-like 5 (139 aa).

Residues 1–10 (MARTKQTARI) are compositionally biased toward polar residues. The segment at 1–43 (MARTKQTARISTGGKAPRKQLAPKAARQSAPATGGVKKPHRFR) is disordered. Position 5 is an N6,N6,N6-trimethyllysine; alternate (K5). An N6,N6-dimethyllysine; alternate modification is found at K5. At K5 the chain carries N6-methyllysine; alternate. Phosphoserine is present on S11. The residue at position 12 (T12) is a Phosphothreonine. N6-acetyllysine is present on K15. N6-methyllysine; alternate is present on residues K19 and K24. K19 and K24 each carry N6-acetyllysine; alternate. A Phosphoserine modification is found at S29. N6,N6,N6-trimethyllysine; alternate is present on K37. K37 carries the post-translational modification N6,N6-dimethyllysine; alternate. K37 carries the N6-methyllysine; alternate modification.

This sequence belongs to the histone H3 family. As to quaternary structure, the nucleosome is a histone octamer containing two molecules each of H2A, H2B, H3 and H4 assembled in one H3-H4 heterotetramer and two H2A-H2B heterodimers. The octamer wraps approximately 147 bp of DNA.

The protein resides in the nucleus. It is found in the chromosome. In terms of biological role, core component of nucleosome. Nucleosomes wrap and compact DNA into chromatin, limiting DNA accessibility to the cellular machineries which require DNA as a template. Histones thereby play a central role in transcription regulation, DNA repair, DNA replication and chromosomal stability. DNA accessibility is regulated via a complex set of post-translational modifications of histones, also called histone code, and nucleosome remodeling. The protein is Histone H3-like 5 of Arabidopsis thaliana (Mouse-ear cress).